The chain runs to 64 residues: Orcokinin peptides (64 aa).

Propeptides lie at residues 1-6 (MNIRPG) and 23-24 (NI).

Belongs to the orcokinin family. Orcokinin-3 is expressed throughout the central nervous system (at protein level).

The protein resides in the secreted. Myotropic peptides. The polypeptide is Orcokinin peptides (Camponotus floridanus (Florida carpenter ant)).